Here is a 369-residue protein sequence, read N- to C-terminus: Protein-glutamate methylesterase/protein-glutamine glutaminase (369 aa).

In terms of domain architecture, Response regulatory spans 6-122 (RAVVADDSHF…SMEMSRLKDQ (117 aa)). Aspartate 56 bears the 4-aspartylphosphate mark. The disordered stretch occupies residues 136–178 (GATGSRSGTGSDSGTAPTTAGGSATDRRGTGGSSGQTTYVANP). Low complexity predominate over residues 138 to 159 (TGSRSGTGSDSGTAPTTAGGSA). Residues 173-367 (TYVANPTLVI…DGVIDTITTE (195 aa)) enclose the CheB-type methylesterase domain. Residues serine 185, histidine 212, and aspartate 309 contribute to the active site.

Belongs to the CheB family. Post-translationally, phosphorylated by CheA. Phosphorylation of the N-terminal regulatory domain activates the methylesterase activity.

It is found in the cytoplasm. It catalyses the reaction [protein]-L-glutamate 5-O-methyl ester + H2O = L-glutamyl-[protein] + methanol + H(+). The catalysed reaction is L-glutaminyl-[protein] + H2O = L-glutamyl-[protein] + NH4(+). Involved in chemotaxis. Part of a chemotaxis signal transduction system that modulates chemotaxis in response to various stimuli. Catalyzes the demethylation of specific methylglutamate residues introduced into the chemoreceptors (methyl-accepting chemotaxis proteins or MCP) by CheR. Also mediates the irreversible deamidation of specific glutamine residues to glutamic acid. This chain is Protein-glutamate methylesterase/protein-glutamine glutaminase, found in Haloarcula marismortui (strain ATCC 43049 / DSM 3752 / JCM 8966 / VKM B-1809) (Halobacterium marismortui).